The following is an 86-amino-acid chain: Small ribosomal subunit protein bS20 (86 aa).

Belongs to the bacterial ribosomal protein bS20 family.

Its function is as follows. Binds directly to 16S ribosomal RNA. The chain is Small ribosomal subunit protein bS20 from Rhodococcus opacus (strain B4).